The sequence spans 196 residues: Orotate phosphoribosyltransferase (196 aa).

Position 117–125 (117–125 (EDIVTTGLS)) interacts with 5-phospho-alpha-D-ribose 1-diphosphate. Residues T121 and R149 each coordinate orotate.

It belongs to the purine/pyrimidine phosphoribosyltransferase family. PyrE subfamily. In terms of assembly, homodimer. The cofactor is Mg(2+).

The catalysed reaction is orotidine 5'-phosphate + diphosphate = orotate + 5-phospho-alpha-D-ribose 1-diphosphate. It participates in pyrimidine metabolism; UMP biosynthesis via de novo pathway; UMP from orotate: step 1/2. Catalyzes the transfer of a ribosyl phosphate group from 5-phosphoribose 1-diphosphate to orotate, leading to the formation of orotidine monophosphate (OMP). This chain is Orotate phosphoribosyltransferase, found in Methylorubrum populi (strain ATCC BAA-705 / NCIMB 13946 / BJ001) (Methylobacterium populi).